Here is a 74-residue protein sequence, read N- to C-terminus: Cytoplasmic envelopment protein 3 (74 aa).

Gly-2 is lipidated: N-myristoyl glycine; by host. The Di-leucine-like internalization motif signature appears at 15 to 16 (LV). An asp/Glu-rich (acidic) region spans residues 34–40 (SMEEFDI). The disordered stretch occupies residues 36-74 (EEFDIPPPPPLPKPVFKQPGPYKIPARSQRCPSKRRDPY).

This sequence belongs to the herpesviridae cytoplasmic envelopment protein 3 family. In terms of assembly, interacts with cytoplasmic envelopment protein 2; this interaction is essential for the proper localization of each protein to the assembly complex and thus for the production of infectious virus. Post-translationally, myristoylation and palmitoylation (probably on one or more of the nearby cysteines at the N-terminus) enable membrane-binding and Golgi apparatus-specific targeting and are essential for efficient packaging. In terms of processing, phosphorylated. Phosphorylation does not seem to be required for recycling to the host Golgi apparatus. Packaging is selective for underphosphorylated forms.

It localises to the virion tegument. Its subcellular location is the virion membrane. The protein resides in the host cell membrane. The protein localises to the host Golgi apparatus membrane. Functionally, plays an important role in the cytoplasmic envelopment of tegument proteins and capsids during the assembly and egress processes. Also participates in viral entry at the fusion step probably by regulating the core fusion machinery. This is Cytoplasmic envelopment protein 3 from Equine herpesvirus 1 (strain Ab4p) (EHV-1).